A 242-amino-acid polypeptide reads, in one-letter code: DNA repair protein RecO (242 aa).

Belongs to the RecO family. As to quaternary structure, monomer.

Functionally, involved in DNA repair and RecF pathway recombination. The sequence is that of DNA repair protein RecO from Salmonella dublin (strain CT_02021853).